Consider the following 871-residue polypeptide: Translation initiation factor IF-2 (871 aa).

Disordered stretches follow at residues 60–101 (KKNI…QEVK) and 184–203 (ESLK…KKES). A compositionally biased stretch (basic residues) spans 61–72 (KNIKTPTAKKPK). The segment covering 73 to 101 (KENIKEQEKLNESEKKEPKKEEKLKQEVK) has biased composition (basic and acidic residues). Positions 370 to 537 (TRAPVITIMG…IVLLQADILE (168 aa)) constitute a tr-type G domain. Residues 379–386 (GHVDHGKT) form a G1 region. 379–386 (GHVDHGKT) lines the GTP pocket. The tract at residues 404-408 (GITQH) is G2. A G3 region spans residues 425 to 428 (DTPG). GTP-binding positions include 425–429 (DTPGH) and 479–482 (NKMD). Positions 479–482 (NKMD) are G4. A G5 region spans residues 515-517 (SAK).

The protein belongs to the TRAFAC class translation factor GTPase superfamily. Classic translation factor GTPase family. IF-2 subfamily.

The protein localises to the cytoplasm. One of the essential components for the initiation of protein synthesis. Protects formylmethionyl-tRNA from spontaneous hydrolysis and promotes its binding to the 30S ribosomal subunits. Also involved in the hydrolysis of GTP during the formation of the 70S ribosomal complex. The polypeptide is Translation initiation factor IF-2 (Campylobacter jejuni (strain RM1221)).